A 341-amino-acid chain; its full sequence is Phenylalanine--tRNA ligase alpha subunit (341 aa).

Residue Glu255 participates in Mg(2+) binding.

Belongs to the class-II aminoacyl-tRNA synthetase family. Phe-tRNA synthetase alpha subunit type 1 subfamily. In terms of assembly, tetramer of two alpha and two beta subunits. Mg(2+) is required as a cofactor.

The protein resides in the cytoplasm. The catalysed reaction is tRNA(Phe) + L-phenylalanine + ATP = L-phenylalanyl-tRNA(Phe) + AMP + diphosphate + H(+). This is Phenylalanine--tRNA ligase alpha subunit from Natranaerobius thermophilus (strain ATCC BAA-1301 / DSM 18059 / JW/NM-WN-LF).